The following is a 299-amino-acid chain: Telomere repeat-binding factor 2 (299 aa).

The HTH myb-type domain occupies 1-61 (MGAPKQKWTP…KWRNISVTAL (61 aa)). The segment at residues 28–57 (WRTILSDTEFSLILKSRSNVDLKDKWRNIS) is a DNA-binding region (H-T-H motif). The disordered stretch occupies residues 93-116 (LTNDDERAKPTSPGGSGGGSPRTC). An H15 domain is found at 121–189 (SITSLDKIIF…KIKHKYRFSS (69 aa)). Residues 243–288 (EAAEAAARAVAEAEFAITEAEQAAKEAERAEAEAEAAQIFAKAAMK) are a coiled coil.

The protein belongs to the histone H1/H5 family. SMH subfamily. Forms a homodimer and heterodimers with TRB1 or TRB3. Interacts with TRB1 and TRB3. As to expression, ubiquitous.

Its subcellular location is the nucleus. The protein localises to the nucleolus. It localises to the chromosome. Its function is as follows. Binds preferentially double-stranded telomeric repeats, but it can also bind to the single G-rich telomeric strand. This chain is Telomere repeat-binding factor 2 (TRB2), found in Arabidopsis thaliana (Mouse-ear cress).